We begin with the raw amino-acid sequence, 695 residues long: NADPH--cytochrome P450 reductase (695 aa).

Residues 1-8 lie on the Lumenal side of the membrane; the sequence is MAQLDTLD. A helical transmembrane segment spans residues 9–31; sequence IVVLVVLLVGSVAYFTKGSYWAV. Over 32 to 695 the chain is Cytoplasmic; that stretch reads PKDPYAAANS…SGSYQEDVWS (664 aa). Positions 66-221 constitute a Flavodoxin-like domain; the sequence is CVIFYGSQTG…DFLAWKEPMW (156 aa). FMN is bound by residues 72–77, 123–126, 169–178, and Asp-204; these read SQTGTA, ATYG, and LGNNTYEHYN. An FAD-binding FR-type domain is found at 277–538; the sequence is HNPYIAPIVE…HVRHSNFKLP (262 aa). Residue Arg-296 participates in NADP(+) binding. FAD-binding positions include 451-454, 469-471, and 486-489; these read RYYS, TAV, and GVTT. Residues Thr-552, 614-615, 620-624, and Glu-656 each bind NADP(+); these read SR and KVYVQ. Trp-694 contacts FAD.

The protein belongs to the NADPH--cytochrome P450 reductase family. In the N-terminal section; belongs to the flavodoxin family. This sequence in the C-terminal section; belongs to the flavoprotein pyridine nucleotide cytochrome reductase family. FAD is required as a cofactor. FMN serves as cofactor.

The protein localises to the endoplasmic reticulum membrane. Its subcellular location is the mitochondrion outer membrane. It localises to the cell membrane. It carries out the reaction 2 oxidized [cytochrome P450] + NADPH = 2 reduced [cytochrome P450] + NADP(+) + H(+). In terms of biological role, this enzyme is required for electron transfer from NADP to cytochrome P450 in microsomes. It can also provide electron transfer to heme oxygenase and cytochrome B5. Involved in ergosterol biosynthesis. This Aspergillus fumigatus (strain ATCC MYA-4609 / CBS 101355 / FGSC A1100 / Af293) (Neosartorya fumigata) protein is NADPH--cytochrome P450 reductase.